A 555-amino-acid chain; its full sequence is Glutamine--tRNA ligase (555 aa).

A 'HIGH' region motif is present at residues 35 to 45 (PEPNGYLHIGH). ATP-binding positions include 36–38 (EPN) and 42–48 (HIGHAKS). D68 and Y213 together coordinate L-glutamine. Residues T232 and 262-263 (RL) each bind ATP. The 'KMSKS' region motif lies at 269-273 (ITSKR).

This sequence belongs to the class-I aminoacyl-tRNA synthetase family. As to quaternary structure, monomer.

The protein resides in the cytoplasm. The catalysed reaction is tRNA(Gln) + L-glutamine + ATP = L-glutaminyl-tRNA(Gln) + AMP + diphosphate. The sequence is that of Glutamine--tRNA ligase from Stutzerimonas stutzeri (strain A1501) (Pseudomonas stutzeri).